The chain runs to 732 residues: MSNQKKRNFQIEAFKHRVVVDPKYADKTWQILERAIHQIYNQDASGLSFEELYRNAYNMVLHKFGEKLYTGFIATMTSHLKEKSKLIEAAQGGSFLEELNKKWNEHNKALEMIRDILMYMDRTYIESTKKTHVHPMGLNLWRDNVVHFTKIHTRLLNTLLDLVQKERIGEVIDRGLMRNVIKMFMDLGESVYQEDFEKPFLDASSEFYKVESQEFIESCDCGDYLKKSEKRLTEEIERVAHYLDAKSEEKITSVVEKEMIANHMQRLVHMENSGLVNMLLNDKYEDLGRMYNLFRRVTNGLVTVRDVMTSHLREMGKQLVTDPEKSKDPVEFVQRLLDERDKYDKIINTAFGNDKTFQNALNSSFEYFINLNARSPEFISLFVDDKLRKGLKGITDVDVEVILDKVMMLFRYLQEKDVFEKYYKQHLAKRLLSGKTVSDDAERSLIVKLKTECGYQFTSKLEGMFTDMKTSEDTMRGFYGSHPELSEGPTLIVQVLTTGSWPTQPAVPCNLPAEVSVLCEKFRSYYLGTHTGRRLSWQTNMGTADIKAIFGKGQKHELNVSTFQMCVLMLFNNSDRLSYKEIEQATEIPAADLKRCLQSLACVKGKNVIKKEPMSKDIGEEDLFVVNDKFTSKFYKVKIGTVVAQKETEPEKQETRQRVEEDRKPQIEAAIVRIMKSRKILDHNNIIAEVTKQLQPRFLANPTEIKKRIESLIERDFLERDSTDRKLYRYLA.

Residues 662 to 724 enclose the Cullin neddylation domain; that stretch reads DRKPQIEAAI…RDFLERDSTD (63 aa). Residue Lys676 forms a Glycyl lysine isopeptide (Lys-Gly) (interchain with G-Cter in NEDD8) linkage.

The protein belongs to the cullin family. In terms of assembly, interacts with CSN2 and RBX1A. Interacts with BTB/POZ domain-containing proteins BPM1, BPM2, BPM3, BPM6, BT1, BT2, BT3, BT5, AT1G01640, AT1G21780 and AT5G48510. Interacts with SR1IP1. Interacts with NPR3 and NPR4. Binds to NPR1; this interaction requires NPR3 and NPR4. Post-translationally, neddylated. Deneddylated via its interaction with the COP9 signalosome (CSN) complex.

Functionally, component of the cullin-RING ubiquitin ligases (CRL), or CUL3-RBX1-BTB protein E3 ligase complexes which mediate the ubiquitination and subsequent proteasomal degradation of target proteins. The functional specificity of the CRL complex depends on the BTB domain-containing protein as the substrate recognition component. Involved in embryo pattern formation and endosperm development. Required for the normal division and organization of the root stem cells and columella root cap cells. Regulates primary root growth by an unknown pathway, but in an ethylene-dependent manner. Functions in distal root patterning, by an ethylene-independent mechanism. Functionally redundant with CUL3B. This is Cullin-3A from Arabidopsis thaliana (Mouse-ear cress).